The sequence spans 264 residues: tRNA (guanine-N(1)-)-methyltransferase (264 aa).

S-adenosyl-L-methionine contacts are provided by residues G125 and 145–150; that span reads LGDFVL.

The protein belongs to the RNA methyltransferase TrmD family. In terms of assembly, homodimer.

It localises to the cytoplasm. It carries out the reaction guanosine(37) in tRNA + S-adenosyl-L-methionine = N(1)-methylguanosine(37) in tRNA + S-adenosyl-L-homocysteine + H(+). Specifically methylates guanosine-37 in various tRNAs. This is tRNA (guanine-N(1)-)-methyltransferase from Burkholderia ambifaria (strain MC40-6).